We begin with the raw amino-acid sequence, 279 residues long: MSTGLLDSWADAGDEFSAPPEVIANPDGTKTVITFRTNQDGKKVKITQKIKEVKVQEKVHPLIAQRKNWKKYGKEKNSPPGPDTSTTQLGEKVDLKLGTSWKQDEKKEEEDKAHERAQKIAVQTIKCRVCGGDHYTAKCPFKDTLGAAAGVTPSGTTPEPTSEGGAGAAGAGKYVPRHLRADANGNVPTREARDDSTTLKVSQLNSFVDEDMLRNELFAKFGPLQRVTIVRNRETGESRGFAYVSFATEEIAQRALDTFNGKGYHSLILHLEWSKKKKT.

Disordered stretches follow at residues 1-26 (MSTGLLDSWADAGDEFSAPPEVIANP), 66-115 (RKNW…KAHE), and 152-171 (TPSGTTPEPTSEGGAGAAGA). Ser78 is subject to Phosphoserine. Positions 102–115 (KQDEKKEEEDKAHE) are enriched in basic and acidic residues. Residues 152 to 163 (TPSGTTPEPTSE) show a composition bias toward low complexity. The region spanning 197 to 276 (TTLKVSQLNS…LILHLEWSKK (80 aa)) is the RRM domain.

It belongs to the eIF-3 subunit G family. As to quaternary structure, component of the eukaryotic translation initiation factor 3 (eIF-3) complex.

The protein localises to the cytoplasm. Functionally, RNA-binding component of the eukaryotic translation initiation factor 3 (eIF-3) complex, which is involved in protein synthesis of a specialized repertoire of mRNAs and, together with other initiation factors, stimulates binding of mRNA and methionyl-tRNAi to the 40S ribosome. The eIF-3 complex specifically targets and initiates translation of a subset of mRNAs involved in cell proliferation. This subunit can bind 18S rRNA. The chain is Eukaryotic translation initiation factor 3 subunit G from Candida albicans (strain SC5314 / ATCC MYA-2876) (Yeast).